A 378-amino-acid chain; its full sequence is Leukosialin (378 aa).

Positions 1–7 (WAQVVSQ) are cleaved as a signal peptide. The Extracellular portion of the chain corresponds to 8 to 231 (ENLPNTMTML…TVPPRPGSSG (224 aa)). O-linked (GalNAc...) threonine glycosylation is found at Thr-13, Thr-15, and Thr-20. Residues 13 to 33 (TMTMLPFTPNSESPSTSEALS) are disordered. O-linked (GalNAc...) serine glycosylation is found at Ser-23, Ser-25, and Ser-27. Thr-28 is a glycosylation site (O-linked (GalNAc...) threonine). Ser-29 and Ser-33 each carry an O-linked (GalNAc...) serine glycan. A glycan (O-linked (GalNAc...) threonine) is linked at Thr-34. Ser-36 and Ser-37 each carry an O-linked (GalNAc...) serine glycan. The O-linked (GalNAc...) threonine glycan is linked to Thr-40. O-linked (GalNAc...) serine glycosylation is found at Ser-108 and Ser-113. O-linked (GalNAc...) threonine glycans are attached at residues Thr-118, Thr-120, and Thr-124. Residues Ser-125 and Ser-126 are each glycosylated (O-linked (GalNAc...) serine). Residue Thr-174 is glycosylated (O-linked (GalNAc...) threonine). Ser-176 and Ser-180 each carry an O-linked (GalNAc...) serine glycan. An O-linked (GalNAc...) threonine glycan is attached at Thr-183. An O-linked (GalNAc...) serine glycan is attached at Ser-187. O-linked (GalNAc...) threonine glycosylation is present at Thr-189. Residues 232 to 254 (MLLVSMLIALTVVLVLVALLLLW) form a helical membrane-spanning segment. The tract at residues 255–285 (RQRQKRRTGALTLSRGGKRNGTVDAWAGPAR) is required for interaction with EZR, MSN and RDX and for co-localization to microvilli. The Cytoplasmic portion of the chain corresponds to 255–378 (RQRQKRRTGA…AKDGAAPQSL (124 aa)). The short motif at 259–273 (KRRTGALTLSRGGKR) is the Nuclear localization signal element. The tract at residues 265–378 (LTLSRGGKRN…AKDGAAPQSL (114 aa)) is disordered. Ser-268 carries the post-translational modification Phosphoserine. Thr-276 is modified (phosphothreonine). Over residues 310–321 (GSGQRPTLTTFF) the composition is skewed to polar residues. Ser-311 carries the post-translational modification Phosphoserine. Thr-316 is modified (phosphothreonine). 2 positions are modified to phosphoserine: Ser-322 and Ser-326. Ser-330 carries the phosphoserine; by PKC/PRKCQ modification. Phosphoserine is present on Ser-354. A Phosphothreonine modification is found at Thr-361.

In terms of assembly, interacts with SIGLEC1. Monomer. Interacts with CTNNB1. Interacts with EZR, MSN and RDX (via FERM domain). Post-translationally, has a high content of sialic acid and O-linked carbohydrate structures. Phosphorylation at Ser-330 is regulated by chemokines, requires its association with ERM proteins (EZR, RDX and MSN) and is essential for its function in the regulation of T-cell trafficking to lymph nodes. In terms of processing, cleavage by CTSG releases its extracellular domain and triggers its intramembrane proteolysis by gamma-secretase releasing the CD43 cytoplasmic tail chain (CD43-ct) which translocates to the nucleus. Post-translationally, sumoylated. In terms of tissue distribution, cell surface of thymocytes, T-lymphocytes, neutrophils, plasma cells and myelomas.

It localises to the membrane. The protein localises to the cell projection. The protein resides in the microvillus. It is found in the uropodium. Its subcellular location is the nucleus. It localises to the PML body. In terms of biological role, predominant cell surface sialoprotein of leukocytes which regulates multiple T-cell functions, including T-cell activation, proliferation, differentiation, trafficking and migration. Positively regulates T-cell trafficking to lymph-nodes via its association with ERM proteins (EZR, RDX and MSN). Negatively regulates Th2 cell differentiation and predisposes the differentiation of T-cells towards a Th1 lineage commitment. Promotes the expression of IFN-gamma by T-cells during T-cell receptor (TCR) activation of naive cells and induces the expression of IFN-gamma by CD4(+) T-cells and to a lesser extent by CD8(+) T-cells. Plays a role in preparing T-cells for cytokine sensing and differentiation into effector cells by inducing the expression of cytokine receptors IFNGR and IL4R, promoting IFNGR and IL4R signaling and by mediating the clustering of IFNGR with TCR. Acts as a major E-selectin ligand responsible for Th17 cell rolling on activated vasculature and recruitment during inflammation. Mediates Th17 cells, but not Th1 cells, adhesion to E-selectin. Acts as a T-cell counter-receptor for SIGLEC1. Its function is as follows. Protects cells from apoptotic signals, promoting cell survival. This Rattus norvegicus (Rat) protein is Leukosialin (Spn).